Consider the following 858-residue polypeptide: Bifunctional uridylyltransferase/uridylyl-removing enzyme (858 aa).

The uridylyltransferase stretch occupies residues 1 to 318 (MNPTDLHPIK…FPRPESDARA (318 aa)). Positions 319 to 674 (IDEEFRSLHG…VRPTEEGSGL (356 aa)) are uridylyl-removing. An HD domain is found at 437–559 (VDQHTLAVIR…VKDERHLNAL (123 aa)). 2 consecutive ACT domains span residues 675–756 (QIMV…LADV) and 789–858 (RLSV…LAGE).

It belongs to the GlnD family. Mg(2+) is required as a cofactor.

It catalyses the reaction [protein-PII]-L-tyrosine + UTP = [protein-PII]-uridylyl-L-tyrosine + diphosphate. It carries out the reaction [protein-PII]-uridylyl-L-tyrosine + H2O = [protein-PII]-L-tyrosine + UMP + H(+). Its activity is regulated as follows. Uridylyltransferase (UTase) activity is inhibited by glutamine, while glutamine activates uridylyl-removing (UR) activity. Its function is as follows. Modifies, by uridylylation and deuridylylation, the PII regulatory proteins (GlnB and homologs), in response to the nitrogen status of the cell that GlnD senses through the glutamine level. Under low glutamine levels, catalyzes the conversion of the PII proteins and UTP to PII-UMP and PPi, while under higher glutamine levels, GlnD hydrolyzes PII-UMP to PII and UMP (deuridylylation). Thus, controls uridylylation state and activity of the PII proteins, and plays an important role in the regulation of nitrogen assimilation and metabolism. In Bordetella avium (strain 197N), this protein is Bifunctional uridylyltransferase/uridylyl-removing enzyme.